The sequence spans 280 residues: RNA polymerase II holoenzyme cyclin-like subunit (280 aa).

In terms of domain architecture, Cyclin N-terminal spans 23–150; that stretch reads ERRKGLEDIF…LIEELGTYLV (128 aa).

The protein belongs to the cyclin family. Cyclin C subfamily. In terms of assembly, component of the SRB8-11 complex, a regulatory module of the Mediator complex.

The protein localises to the nucleus. Functionally, component of the SRB8-11 complex. The SRB8-11 complex is a regulatory module of the Mediator complex which is itself involved in regulation of basal and activated RNA polymerase II-dependent transcription. The SRB8-11 complex may be involved in the transcriptional repression of a subset of genes regulated by Mediator. It may inhibit the association of the Mediator complex with RNA polymerase II to form the holoenzyme complex. The SRB8-11 complex phosphorylates the C-terminal domain (CTD) of the largest subunit of RNA polymerase II. The polypeptide is RNA polymerase II holoenzyme cyclin-like subunit (SSN8) (Yarrowia lipolytica (strain CLIB 122 / E 150) (Yeast)).